A 179-amino-acid polypeptide reads, in one-letter code: Large ribosomal subunit protein uL5 (179 aa).

Belongs to the universal ribosomal protein uL5 family. As to quaternary structure, part of the 50S ribosomal subunit; part of the 5S rRNA/L5/L18/L25 subcomplex. Contacts the 5S rRNA and the P site tRNA. Forms a bridge to the 30S subunit in the 70S ribosome.

Functionally, this is one of the proteins that bind and probably mediate the attachment of the 5S RNA into the large ribosomal subunit, where it forms part of the central protuberance. In the 70S ribosome it contacts protein S13 of the 30S subunit (bridge B1b), connecting the 2 subunits; this bridge is implicated in subunit movement. Contacts the P site tRNA; the 5S rRNA and some of its associated proteins might help stabilize positioning of ribosome-bound tRNAs. This Prochlorococcus marinus (strain MIT 9313) protein is Large ribosomal subunit protein uL5.